A 299-amino-acid polypeptide reads, in one-letter code: Large ribosomal subunit protein uL18 (299 aa).

Belongs to the universal ribosomal protein uL18 family. In terms of assembly, component of the large ribosomal subunit (LSU).

It localises to the cytoplasm. Its subcellular location is the nucleus. Functionally, component of the ribosome, a large ribonucleoprotein complex responsible for the synthesis of proteins in the cell. The small ribosomal subunit (SSU) binds messenger RNAs (mRNAs) and translates the encoded message by selecting cognate aminoacyl-transfer RNA (tRNA) molecules. The large subunit (LSU) contains the ribosomal catalytic site termed the peptidyl transferase center (PTC), which catalyzes the formation of peptide bonds, thereby polymerizing the amino acids delivered by tRNAs into a polypeptide chain. The nascent polypeptides leave the ribosome through a tunnel in the LSU and interact with protein factors that function in enzymatic processing, targeting, and the membrane insertion of nascent chains at the exit of the ribosomal tunnel. The protein is Large ribosomal subunit protein uL18 (RpL5) of Bombyx mori (Silk moth).